Consider the following 122-residue polypeptide: Large ribosomal subunit protein uL14 (122 aa).

It belongs to the universal ribosomal protein uL14 family. Part of the 50S ribosomal subunit. Forms a cluster with proteins L3 and L19. In the 70S ribosome, L14 and L19 interact and together make contacts with the 16S rRNA in bridges B5 and B8.

Its function is as follows. Binds to 23S rRNA. Forms part of two intersubunit bridges in the 70S ribosome. This is Large ribosomal subunit protein uL14 from Thermodesulfovibrio yellowstonii (strain ATCC 51303 / DSM 11347 / YP87).